The following is a 497-amino-acid chain: MSMKLEISFAPSALIEAGLVLSLKEAEATLPAGAATVDPSGIFAKAAATAKFKAKAMSVLDILAPTGSQADRLIVIGAGKAADLVDHDWLRLGGVAAANLKGSEAVTVFLDADGLTITAEGVRDFAIGMLLRAYSFDDYKTKKKDDDDKAPSAVQITLVTAVADAAERLFAAEGRAVVDGVLLARNLVNLPANVLGPVEFADRAKALEALGVEVEILTETEMASLGMGALLGVAQGSVRPPRLAVMQWKGGAPEGQPIAFIGKGVVFDTGGISIKPAGGMEDMKGDMGGAAAVIGLMHTLAARKAKVNAIGILGLVENMPDGNAQRPGDIVTSMSGQTIEVINTDAEGRLVLCDALWYCNDRFKPAFMINLATLTGAILVALANLHAGLFSNDDTLAENLLKAGLSTNERLWRMPLGKDYDKLIDSKFADMKNTGGRYGGSITAAQFLKRFVGDTPWAHLDIAGTAMASPKDEINQSWASGFGVRLLDQLVRDAYEA.

Lys-263 and Asp-268 together coordinate Mn(2+). Lys-275 is a catalytic residue. Mn(2+) is bound by residues Asp-286, Asp-345, and Glu-347. Arg-349 is a catalytic residue.

Belongs to the peptidase M17 family. Mn(2+) serves as cofactor.

The protein resides in the cytoplasm. It catalyses the reaction Release of an N-terminal amino acid, Xaa-|-Yaa-, in which Xaa is preferably Leu, but may be other amino acids including Pro although not Arg or Lys, and Yaa may be Pro. Amino acid amides and methyl esters are also readily hydrolyzed, but rates on arylamides are exceedingly low.. The catalysed reaction is Release of an N-terminal amino acid, preferentially leucine, but not glutamic or aspartic acids.. Functionally, presumably involved in the processing and regular turnover of intracellular proteins. Catalyzes the removal of unsubstituted N-terminal amino acids from various peptides. This is Probable cytosol aminopeptidase from Allorhizobium ampelinum (strain ATCC BAA-846 / DSM 112012 / S4) (Agrobacterium vitis (strain S4)).